The sequence spans 469 residues: Acetyl-CoA decarbonylase/synthase complex subunit beta 2 (469 aa).

Positions 187, 190, 276, and 278 each coordinate [Ni-Fe-S] cluster.

It belongs to the CdhC family. Monomer. The ACDS complex is made up of alpha, epsilon, beta, gamma and delta chains with a probable stoichiometry of (alpha(2)epsilon(2))(4)-beta(8)-(gamma(1)delta(1))(8) (Potential). It depends on [Ni-Fe-S] cluster as a cofactor.

The catalysed reaction is Co(I)-[corrinoid Fe-S protein] + acetyl-CoA + H(+) = methyl-Co(III)-[corrinoid Fe-S protein] + CO + CoA. In terms of biological role, part of a complex that catalyzes the reversible cleavage of acetyl-CoA, allowing autotrophic growth from CO(2). The alpha-epsilon complex generates CO from CO(2), while the beta subunit (this protein) combines the CO with CoA and a methyl group to form acetyl-CoA. The methyl group, which is incorporated into acetyl-CoA, is transferred to the beta subunit by a corrinoid iron-sulfur protein (the gamma-delta complex). This chain is Acetyl-CoA decarbonylase/synthase complex subunit beta 2 (cdhC2), found in Methanocaldococcus jannaschii (strain ATCC 43067 / DSM 2661 / JAL-1 / JCM 10045 / NBRC 100440) (Methanococcus jannaschii).